A 447-amino-acid chain; its full sequence is N-succinylarginine dihydrolase (447 aa).

Residues 19–28 (AGLSFGNKAS), N110, and 137–138 (HR) each bind substrate. E174 is a catalytic residue. A substrate-binding site is contributed by R212. Residue H248 is part of the active site. Residues D250 and N359 each contribute to the substrate site. C365 functions as the Nucleophile in the catalytic mechanism.

This sequence belongs to the succinylarginine dihydrolase family. In terms of assembly, homodimer.

The catalysed reaction is N(2)-succinyl-L-arginine + 2 H2O + 2 H(+) = N(2)-succinyl-L-ornithine + 2 NH4(+) + CO2. Its pathway is amino-acid degradation; L-arginine degradation via AST pathway; L-glutamate and succinate from L-arginine: step 2/5. Functionally, catalyzes the hydrolysis of N(2)-succinylarginine into N(2)-succinylornithine, ammonia and CO(2). The protein is N-succinylarginine dihydrolase of Escherichia coli O157:H7.